We begin with the raw amino-acid sequence, 103 residues long: MNVTLTKAELADLLFERVGLNKREAKDMVEGFFEEIRTALERGDSVKLSGFGNFQLRDKPQRPGRNPKTGEEIPITARRVVTFHASQKLKAAVEQLSDASKQP.

Residues 51 to 73 (FGNFQLRDKPQRPGRNPKTGEEI) form a disordered region.

The protein belongs to the bacterial histone-like protein family. As to quaternary structure, heterodimer of an alpha and a beta chain.

This protein is one of the two subunits of integration host factor, a specific DNA-binding protein that functions in genetic recombination as well as in transcriptional and translational control. This Azoarcus sp. (strain BH72) protein is Integration host factor subunit alpha.